Consider the following 74-residue polypeptide: Translation initiation factor IF-1 2 (74 aa).

Positions 1–73 (MTKNKNVIEV…TRGRIVFRYR (73 aa)) constitute an S1-like domain.

It belongs to the IF-1 family. Component of the 30S ribosomal translation pre-initiation complex which assembles on the 30S ribosome in the order IF-2 and IF-3, IF-1 and N-formylmethionyl-tRNA(fMet); mRNA recruitment can occur at any time during PIC assembly.

Its subcellular location is the cytoplasm. Its function is as follows. One of the essential components for the initiation of protein synthesis. Stabilizes the binding of IF-2 and IF-3 on the 30S subunit to which N-formylmethionyl-tRNA(fMet) subsequently binds. Helps modulate mRNA selection, yielding the 30S pre-initiation complex (PIC). Upon addition of the 50S ribosomal subunit IF-1, IF-2 and IF-3 are released leaving the mature 70S translation initiation complex. The protein is Translation initiation factor IF-1 2 of Streptomyces avermitilis (strain ATCC 31267 / DSM 46492 / JCM 5070 / NBRC 14893 / NCIMB 12804 / NRRL 8165 / MA-4680).